The sequence spans 287 residues: Nuclease S1 (287 aa).

The first 20 residues, 1-20 (MPRLLPISAATLALAQLTYG), serve as a signal peptide directing secretion. Residues Trp-21, His-26, Asp-65, and His-80 each contribute to the a divalent metal cation site. Residues 21 to 26 (WGNLGH), 65 to 71 (DTYKYTD), 80 to 83 (HFID), and 93 to 98 (GVDYDR) each bind substrate. Disulfide bonds link Cys-92-Cys-236 and Cys-100-Cys-105. N-linked (GlcNAc...) asparagine glycosylation is found at Asn-112 and Asn-122. Residues His-135, Asp-139, His-145, His-168, and Asp-172 each coordinate a divalent metal cation. The interval 135–183 (HIIGDIHQPLHDENLEAGGNGIDVTYDGETTNLHHIWDTNMPEEAAGGY) is substrate binding. Asn-248 carries N-linked (GlcNAc...) asparagine glycosylation.

It belongs to the nuclease type I family. In terms of assembly, monomer. Requires Zn(2+) as cofactor.

The enzyme catalyses Endonucleolytic cleavage to 5'-phosphomononucleotide and 5'-phosphooligonucleotide end-products.. With respect to regulation, inhibited by inorganic phosphate (Pi). Hydrolyzes only single-stranded DNA and RNA without apparent specificity for bases. In Aspergillus oryzae (strain ATCC 42149 / RIB 40) (Yellow koji mold), this protein is Nuclease S1.